The primary structure comprises 184 residues: ATP synthase subunit b (184 aa).

The chain crosses the membrane as a helical span at residues 16–36 (LIPPIPELVIGLIAFVIVFGF).

The protein belongs to the ATPase B chain family. As to quaternary structure, F-type ATPases have 2 components, F(1) - the catalytic core - and F(0) - the membrane proton channel. F(1) has five subunits: alpha(3), beta(3), gamma(1), delta(1), epsilon(1). F(0) has three main subunits: a(1), b(2) and c(10-14). The alpha and beta chains form an alternating ring which encloses part of the gamma chain. F(1) is attached to F(0) by a central stalk formed by the gamma and epsilon chains, while a peripheral stalk is formed by the delta and b chains.

It is found in the cell membrane. Functionally, f(1)F(0) ATP synthase produces ATP from ADP in the presence of a proton or sodium gradient. F-type ATPases consist of two structural domains, F(1) containing the extramembraneous catalytic core and F(0) containing the membrane proton channel, linked together by a central stalk and a peripheral stalk. During catalysis, ATP synthesis in the catalytic domain of F(1) is coupled via a rotary mechanism of the central stalk subunits to proton translocation. Component of the F(0) channel, it forms part of the peripheral stalk, linking F(1) to F(0). The chain is ATP synthase subunit b from Streptomyces coelicolor (strain ATCC BAA-471 / A3(2) / M145).